An 85-amino-acid chain; its full sequence is Large ribosomal subunit protein bL27 (85 aa).

The tract at residues 1–24 is disordered; that stretch reads MAHKKAGGSSRNGRDSHSKRLGVK.

The protein belongs to the bacterial ribosomal protein bL27 family.

The protein is Large ribosomal subunit protein bL27 of Nitrosomonas eutropha (strain DSM 101675 / C91 / Nm57).